We begin with the raw amino-acid sequence, 713 residues long: Ribosomal RNA large subunit methyltransferase K/L (713 aa).

In terms of domain architecture, THUMP spans 43–154; it reads LAYRITLWTR…NGVITIAMNF (112 aa).

It belongs to the methyltransferase superfamily. RlmKL family.

It is found in the cytoplasm. It carries out the reaction guanosine(2445) in 23S rRNA + S-adenosyl-L-methionine = N(2)-methylguanosine(2445) in 23S rRNA + S-adenosyl-L-homocysteine + H(+). It catalyses the reaction guanosine(2069) in 23S rRNA + S-adenosyl-L-methionine = N(2)-methylguanosine(2069) in 23S rRNA + S-adenosyl-L-homocysteine + H(+). Specifically methylates the guanine in position 2445 (m2G2445) and the guanine in position 2069 (m7G2069) of 23S rRNA. The sequence is that of Ribosomal RNA large subunit methyltransferase K/L from Shewanella sp. (strain MR-4).